A 40-amino-acid chain; its full sequence is MAETTGRIPLWLIGTVTGIPVIGLVGIFFYGSYSGLGSSL.

A helical transmembrane segment spans residues I8–F28.

It belongs to the PsbJ family. In terms of assembly, PSII is composed of 1 copy each of membrane proteins PsbA, PsbB, PsbC, PsbD, PsbE, PsbF, PsbH, PsbI, PsbJ, PsbK, PsbL, PsbM, PsbT, PsbX, PsbY, PsbZ, Psb30/Ycf12, at least 3 peripheral proteins of the oxygen-evolving complex and a large number of cofactors. It forms dimeric complexes.

Its subcellular location is the plastid. It localises to the chloroplast thylakoid membrane. Functionally, one of the components of the core complex of photosystem II (PSII). PSII is a light-driven water:plastoquinone oxidoreductase that uses light energy to abstract electrons from H(2)O, generating O(2) and a proton gradient subsequently used for ATP formation. It consists of a core antenna complex that captures photons, and an electron transfer chain that converts photonic excitation into a charge separation. The chain is Photosystem II reaction center protein J from Cucumis sativus (Cucumber).